The following is a 165-amino-acid chain: Urease accessory protein UreE (165 aa).

This sequence belongs to the UreE family.

It is found in the cytoplasm. Involved in urease metallocenter assembly. Binds nickel. Probably functions as a nickel donor during metallocenter assembly. This Micrococcus luteus (strain ATCC 4698 / DSM 20030 / JCM 1464 / CCM 169 / CCUG 5858 / IAM 1056 / NBRC 3333 / NCIMB 9278 / NCTC 2665 / VKM Ac-2230) (Micrococcus lysodeikticus) protein is Urease accessory protein UreE.